The following is a 132-amino-acid chain: Precursor of CEP10 (132 aa).

The signal sequence occupies residues 1 to 19 (MKLFIIIVVTSLTISKVFD). Residues 20–66 (KTLVTIEARNLRKMDRHEHFNANEDFVEAKMLKKIDNKNNLNNRCIN) constitute a propeptide that is removed on maturation. Hydroxyproline occurs at positions 70 and 73. A propeptide spanning residues 82 to 91 (PKVINNKFTK) is cleaved from the precursor. 3 positions are modified to hydroxyproline: Pro95, Pro98, and Pro102. The propeptide occupies 107-116 (LRVVNNKFTN). Residues Pro120, Pro123, and Pro127 each carry the hydroxyproline modification. A propeptide is located at residue Pro132.

This sequence belongs to the C-terminally encoded plant signaling peptide (CEP) family. Interacts with CEP receptors (e.g. CEPR1 and CEPR2). In terms of processing, the mature small signaling peptide is generated by proteolytic processing of the longer precursor.

It is found in the secreted. It localises to the extracellular space. The protein resides in the apoplast. Functionally, extracellular signaling peptide that may regulate primary root growth rate and systemic nitrogen (N)-demand signaling. This Arabidopsis thaliana (Mouse-ear cress) protein is Precursor of CEP10.